The chain runs to 633 residues: E3 ubiquitin-protein ligase ZSWIM2 (633 aa).

The SWIM-type zinc-finger motif lies at 54-87; it reads FRVFLGNPHVCNCSTFPKGGELCKHICWVLLKKF. An RING-type 1 zinc finger spans residues 147–198; the sequence is CSICQELLLEKKLPVTFCRFGCGNSIHIKCMKILANYQSTSNTSMLKCPLCR. The ZZ-type zinc finger occupies 229–280; sequence HLGIPCNNCKQFPIEGKCYKCTECIEYHLCQECFDSCCHLSHTFTFREKRNQ. 8 residues coordinate Zn(2+): cysteine 234, cysteine 237, cysteine 249, cysteine 252, cysteine 258, cysteine 261, histidine 267, and histidine 270. The segment at 344–388 adopts an RING-type 2 zinc-finger fold; that stretch reads CLLCLKAFHLGQHTRLLPCTHKFHRKCIDNWLFHKCNSCPIDGQV.

As to quaternary structure, dimer. Interacts with UBE2D1. In terms of processing, polyubiquitinated. Polyubiquitination is followed by degradation via the proteasome. Expression is testis-specific.

The catalysed reaction is S-ubiquitinyl-[E2 ubiquitin-conjugating enzyme]-L-cysteine + [acceptor protein]-L-lysine = [E2 ubiquitin-conjugating enzyme]-L-cysteine + N(6)-ubiquitinyl-[acceptor protein]-L-lysine.. Its function is as follows. E3 ubiquitin-protein ligase involved in the regulation of Fas-, DR3- and DR4-mediated apoptosis. Functions in conjunction with the UBE2D1, UBE2D3 and UBE2E1 E2 ubiquitin-conjugating enzymes. The chain is E3 ubiquitin-protein ligase ZSWIM2 from Homo sapiens (Human).